The primary structure comprises 112 residues: UPF0235 protein RHE_CH03912 (112 aa).

It belongs to the UPF0235 family.

In Rhizobium etli (strain ATCC 51251 / DSM 11541 / JCM 21823 / NBRC 15573 / CFN 42), this protein is UPF0235 protein RHE_CH03912.